The sequence spans 218 residues: Uridine kinase (218 aa).

16 to 23 (GGSGSGKT) is an ATP binding site.

Belongs to the uridine kinase family.

It localises to the cytoplasm. The enzyme catalyses uridine + ATP = UMP + ADP + H(+). It catalyses the reaction cytidine + ATP = CMP + ADP + H(+). Its pathway is pyrimidine metabolism; CTP biosynthesis via salvage pathway; CTP from cytidine: step 1/3. It functions in the pathway pyrimidine metabolism; UMP biosynthesis via salvage pathway; UMP from uridine: step 1/1. This Limosilactobacillus reuteri (strain DSM 20016) (Lactobacillus reuteri) protein is Uridine kinase.